The sequence spans 517 residues: T-box transcription factor TBX22 (517 aa).

Positions 1–83 (MALSSRAHAF…SDESNSQESL (83 aa)) are disordered. Acidic residues predominate over residues 35–45 (LQEEQFVEEGE). The segment covering 46 to 66 (EILRSPSRDSQQPEKRLKAES) has biased composition (basic and acidic residues). Positions 74 to 83 (SDESNSQESL) are enriched in low complexity. A DNA-binding region (T-box) is located at residues 93–280 (LQGSDLWKRF…RNPFAKGFRD (188 aa)). The segment at 312–333 (TQSGSSGSSPVTSSGGAPSPLN) is disordered. The segment covering 314–333 (SGSSGSSPVTSSGGAPSPLN) has biased composition (low complexity).

It is found in the nucleus. In terms of biological role, probable transcriptional regulator involved in developmental processes. This is major determinant crucial to palatogenesis. The sequence is that of T-box transcription factor TBX22 (Tbx22) from Mus musculus (Mouse).